A 485-amino-acid chain; its full sequence is Anthranilate synthase component I-like protein (485 aa).

Residues S69 and 271 to 273 (PFA) contribute to the L-tryptophan site. Residue 306–307 (GT) participates in chorismate binding. Residue E333 coordinates Mg(2+). Residues R441, 455–457 (GAG), and G457 contribute to the chorismate site. A Mg(2+)-binding site is contributed by E470.

The protein belongs to the anthranilate synthase component I family. In terms of assembly, tetramer of two components I and two components II. It depends on Mg(2+) as a cofactor.

It carries out the reaction chorismate + L-glutamine = anthranilate + pyruvate + L-glutamate + H(+). It functions in the pathway amino-acid biosynthesis; L-tryptophan biosynthesis; L-tryptophan from chorismate: step 1/5. This Synechocystis sp. (strain ATCC 27184 / PCC 6803 / Kazusa) protein is Anthranilate synthase component I-like protein (trpE2).